The chain runs to 581 residues: Frizzled-3 (581 aa).

A signal peptide spans 1–19; sequence MYAASILILHLTWAVATIA. At 20–237 the chain is on the extracellular side; that stretch reads ANGAGHNGPV…TSSQKKTSET (218 aa). The region spanning 35–156 is the FZ domain; sequence PNGLQCQPIA…PEKHELCMQI (122 aa). Disulfide bonds link Cys-40–Cys-101, Cys-48–Cys-94, Cys-85–Cys-123, Cys-112–Cys-153, and Cys-116–Cys-141. Asn-54 is a glycosylation site (N-linked (GlcNAc...) asparagine). N-linked (GlcNAc...) asparagine glycosylation occurs at Asn-206. A helical transmembrane segment spans residues 238 to 258; the sequence is LILGLSAVCFVLTLFALVTFW. At 259 to 270 the chain is on the cytoplasmic side; it reads AEPTRFGYPERP. The chain crosses the membrane as a helical span at residues 271–291; the sequence is VLFLCLCYNLFSVCYLERIVF. At 292-321 the chain is on the extracellular side; sequence HNQARMHDVELQGRLMRPGCLLTPPCLASY. Residues 322 to 342 traverse the membrane as a helical segment; that stretch reads ITTSYLSLCAASWWLIFALCF. Topologically, residues 343–359 are cytoplasmic; the sequence is YLSSHKKWSSEALEKRS. Residues 360-380 traverse the membrane as a helical segment; sequence GLFHVLAWVPPLAPPIAALLL. Residues 381-393 lie on the Extracellular side of the membrane; that stretch reads EKVRPSELTGMCY. A helical transmembrane segment spans residues 394-414; that stretch reads APGFVELPALVLLLLGLYFTL. At 415–442 the chain is on the cytoplasmic side; that stretch reads RASRSLLSLQQQLQPTLAHHRFGQIRKR. The chain crosses the membrane as a helical span at residues 443-463; it reads FVLFSLLYFAPTTAGVVAALC. Over 464 to 488 the chain is Extracellular; sequence ERYADSVPSCSTPDDCLSPTPLSAW. The chain crosses the membrane as a helical span at residues 489–509; the sequence is PALVRIFFQLVGGTLTGLWVW. Residues 510 to 581 lie on the Cytoplasmic side of the membrane; that stretch reads SRKTCESYRN…PVYNPNQSRV (72 aa). Residues 579–581 carry the PDZ-binding motif; it reads SRV.

It belongs to the G-protein coupled receptor Fz/Smo family. Wing, leg and eye imaginal disks. In embryos, expressed is seen in brain, proventriculus, Malpighian tubules, anal plate and visceral mesoderm of parasegment 8.

Its subcellular location is the membrane. Its function is as follows. Receptor for Wnt proteins. Most of frizzled receptors are coupled to the beta-catenin canonical signaling pathway, which leads to the activation of disheveled proteins, inhibition of GSK-3 kinase, nuclear accumulation of beta-catenin and activation of Wnt target genes. A second signaling pathway involving PKC and calcium fluxes has been seen for some family members, but it is not yet clear if it represents a distinct pathway or if it can be integrated in the canonical pathway, as PKC seems to be required for Wnt-mediated inactivation of GSK-3 kinase. Both pathways seem to involve interactions with G-proteins. Required to coordinate the cytoskeletons of epidermal cells to produce a parallel array of cuticular hairs and bristles. In Drosophila melanogaster (Fruit fly), this protein is Frizzled-3 (fz3).